The primary structure comprises 296 residues: Nucleotide-binding protein Pnuc_1915 (296 aa).

Residue 8-15 participates in ATP binding; the sequence is GISGSGKS. 57-60 is a GTP binding site; it reads DARR.

This sequence belongs to the RapZ-like family.

Displays ATPase and GTPase activities. The sequence is that of Nucleotide-binding protein Pnuc_1915 from Polynucleobacter asymbioticus (strain DSM 18221 / CIP 109841 / QLW-P1DMWA-1) (Polynucleobacter necessarius subsp. asymbioticus).